We begin with the raw amino-acid sequence, 337 residues long: CMP-sialic acid transporter (337 aa).

Residues 1-9 (MAAPRDNVT) lie on the Cytoplasmic side of the membrane. The chain crosses the membrane as a helical span at residues 10–30 (LLFKLYCLAVMTLMAAVYTIA). At 31 to 45 (LRYTRTSDKELYFST) the chain is on the lumenal side. Residues 46–64 (TAVCITEVIKLLLSVGILA) traverse the membrane as a helical segment. Lys-55 is a CMP-N-acetyl-beta-neuraminate binding site. Residues 65 to 87 (KETGSLGRFKASLRENVLGSPKE) are Cytoplasmic-facing. A helical membrane pass occupies residues 88–108 (LLKLSVPSLVYAVQNNMAFLA). CMP-N-acetyl-beta-neuraminate is bound at residue 101–102 (QN). The Lumenal portion of the chain corresponds to 109–114 (LSNLDA). Residues 115-135 (AVYQVTYQLKIPCTALCTVLM) traverse the membrane as a helical segment. 117–124 (YQVTYQLK) provides a ligand contact to CMP-N-acetyl-beta-neuraminate. Topologically, residues 136–141 (LNRTLS) are cytoplasmic. A helical membrane pass occupies residues 142 to 160 (KLQWVSVFMLCAGVTLVQW). Residues 161 to 175 (KPAQATKVVVEQNPL) are Lumenal-facing. A helical membrane pass occupies residues 176–196 (LGFGAIAIAVLCSGFAGVYFE). Ser-188 serves as a coordination point for CMP-N-acetyl-beta-neuraminate. Residues 197 to 209 (KVLKSSDTSLWVR) lie on the Cytoplasmic side of the membrane. 210-214 (NIQMY) contacts CMP-N-acetyl-beta-neuraminate. A helical transmembrane segment spans residues 210 to 228 (NIQMYLSGIIVTLAGVYLS). Residues 229–243 (DGAEIKEKGFFYGYT) lie on the Lumenal side of the membrane. Residues 244–262 (YYVWFVIFLASVGGLYTSV) form a helical membrane-spanning segment. At 263–269 (VVKYTDN) the chain is on the cytoplasmic side. Residues 270–288 (IMKGFSAAAAIVLSTIASV) traverse the membrane as a helical segment. Residue Lys-272 participates in CMP-N-acetyl-beta-neuraminate binding. Topologically, residues 289–296 (MLFGLQIT) are lumenal. A helical transmembrane segment spans residues 297 to 315 (LTFALGTLLVCVSIYLYGL). Topologically, residues 316–337 (PRQDTTSIQQGETASKERVIGV) are cytoplasmic. The segment at 316–337 (PRQDTTSIQQGETASKERVIGV) is disordered.

The protein belongs to the nucleotide-sugar transporter family. SLC35A subfamily. As to quaternary structure, monomer.

It is found in the golgi apparatus membrane. The protein resides in the golgi apparatus. It carries out the reaction CMP-N-acetyl-beta-neuraminate(in) + CMP(out) = CMP-N-acetyl-beta-neuraminate(out) + CMP(in). It catalyses the reaction CMP-N-acetyl-beta-neuraminate(in) + AMP(out) = CMP-N-acetyl-beta-neuraminate(out) + AMP(in). The enzyme catalyses CDP-L-ribitol(in) + CDP(out) = CDP-L-ribitol(out) + CDP(in). The catalysed reaction is UMP(out) + CMP-N-acetyl-beta-neuraminate(in) = UMP(in) + CMP-N-acetyl-beta-neuraminate(out). In terms of biological role, transports CMP-sialic acid from the cytosol into the Golgi apparatus, functioning as an antiporter that exchanges CMP-sialic acid for CMP. Binds both CMP-sialic acid and free CMP, but has higher affinity for free CMP. Also able to exchange CMP-sialic acid for AMP and UMP. Also mediates the transport of CDP-ribitol. The chain is CMP-sialic acid transporter from Homo sapiens (Human).